The primary structure comprises 342 residues: Cell division protein FtsQ (342 aa).

At 1-80 (MDGAGSLTRS…ALVERYLPRR (80 aa)) the chain is on the cytoplasmic side. Residues 81–99 (VGISMTVLLLIGSCGFGIV) traverse the membrane as a helical segment. The Periplasmic segment spans residues 100–342 (KGGHLQDFVT…KKKKKAGDAA (243 aa)). The 69-residue stretch at 124 to 192 (FRITSVVING…GQLMIELTER (69 aa)) folds into the POTRA domain.

The protein belongs to the FtsQ/DivIB family. FtsQ subfamily.

The protein localises to the cell inner membrane. Essential cell division protein. The sequence is that of Cell division protein FtsQ from Bradyrhizobium diazoefficiens (strain JCM 10833 / BCRC 13528 / IAM 13628 / NBRC 14792 / USDA 110).